An 864-amino-acid chain; its full sequence is Leucine--tRNA ligase (864 aa).

The short motif at 40–51 is the 'HIGH' region element; sequence PYPSGAGLHVGH. Residues 636–640 carry the 'KMSKS' region motif; that stretch reads KMSKS. K639 provides a ligand contact to ATP.

This sequence belongs to the class-I aminoacyl-tRNA synthetase family.

The protein resides in the cytoplasm. It catalyses the reaction tRNA(Leu) + L-leucine + ATP = L-leucyl-tRNA(Leu) + AMP + diphosphate. The protein is Leucine--tRNA ligase of Leptospira borgpetersenii serovar Hardjo-bovis (strain JB197).